A 2198-amino-acid chain; its full sequence is RNA-directed RNA polymerase L (2198 aa).

Positions 26–284 (KEALLSQVEV…AHSDSLAPEC (259 aa)) are endonuclease. Glu51, Asp89, and Glu102 together coordinate Mn(2+). Lys115 is an active-site residue. Residues 1161-1359 (CDMKMAVNNG…FLSSKFNKFV (199 aa)) enclose the RdRp catalytic domain. Asp1319 provides a ligand contact to Mg(2+).

The protein belongs to the Bunyavirales RNA polymerase family. As to quaternary structure, homomultimer; the oligomeric structure is essential for the polymerase activity. Interacts with nucleoprotein N. Interacts with protein Z; this interaction inhibits viral transcription and replication, Z partially blocks the product exit tunnel for the releasing nascent RNA product. Mn(2+) serves as cofactor. Mg(2+) is required as a cofactor.

Its subcellular location is the virion. The protein localises to the host cytoplasm. The enzyme catalyses RNA(n) + a ribonucleoside 5'-triphosphate = RNA(n+1) + diphosphate. RNA-dependent RNA polymerase, which is responsible for the replication and transcription of the viral RNA genome using antigenomic RNA as an intermediate. During transcription, synthesizes subgenomic RNAs and assures their capping by a cap-snatching mechanism, which involves the endonuclease activity cleaving the host capped pre-mRNAs. These short capped RNAs are then used as primers for viral transcription. The 3'-end of subgenomic mRNAs molecules are heterogeneous and not polyadenylated. The replicase function is to direct synthesis of antigenomic and genomic RNA which are encapsidated and non capped. As a consequence of the use of the same enzyme for both transcription and replication, these mechanisms need to be well coordinated. These processes may be regulated by proteins N and Z in a dose-dependent manner. Z protein inhibits the viral polymerase L und thus the viral transcription and RNA synthesis. The polypeptide is RNA-directed RNA polymerase L (Homo sapiens (Human)).